The sequence spans 269 residues: uncharacterized protein (269 aa).

15 to 41 (QKSVLITGCSSGIGLESALELKRQGFH) lines the NADP(+) pocket. Position 146 (serine 146) interacts with substrate. The active-site Proton acceptor is tyrosine 159.

It belongs to the short-chain dehydrogenases/reductases (SDR) family.

This is an uncharacterized protein from Escherichia coli O6:H1 (strain CFT073 / ATCC 700928 / UPEC).